The chain runs to 326 residues: Tetraacyldisaccharide 4'-kinase (326 aa).

Thr55–Thr62 serves as a coordination point for ATP.

It belongs to the LpxK family.

It catalyses the reaction a lipid A disaccharide + ATP = a lipid IVA + ADP + H(+). The protein operates within glycolipid biosynthesis; lipid IV(A) biosynthesis; lipid IV(A) from (3R)-3-hydroxytetradecanoyl-[acyl-carrier-protein] and UDP-N-acetyl-alpha-D-glucosamine: step 6/6. Transfers the gamma-phosphate of ATP to the 4'-position of a tetraacyldisaccharide 1-phosphate intermediate (termed DS-1-P) to form tetraacyldisaccharide 1,4'-bis-phosphate (lipid IVA). The protein is Tetraacyldisaccharide 4'-kinase of Tolumonas auensis (strain DSM 9187 / NBRC 110442 / TA 4).